Consider the following 203-residue polypeptide: E3 ubiquitin-protein ligase rnf152-A (203 aa).

The segment at 12–55 adopts an RING-type; degenerate zinc-finger fold; sequence CQICFNYYSPRRRPKLLDCKRTCCSVCLQQMRACQKDLRCPWCR. Residues 167–187 traverse the membrane as a helical segment; that stretch reads SGICTVILVACVLVFLLGIVL.

Belongs to the RNF152 family.

The protein localises to the lysosome membrane. It carries out the reaction S-ubiquitinyl-[E2 ubiquitin-conjugating enzyme]-L-cysteine + [acceptor protein]-L-lysine = [E2 ubiquitin-conjugating enzyme]-L-cysteine + N(6)-ubiquitinyl-[acceptor protein]-L-lysine.. The protein operates within protein modification; protein ubiquitination. E3 ubiquitin-protein ligase that acts as a negative regulator of mTORC1 signaling by mediating ubiquitination of RagA/RRAGA and RHEB. Catalyzes 'Lys-63'-linked polyubiquitination of RagA/RRAGA in response to amino acid starvation, thereby regulating mTORC1 signaling. Also mediates monoubiquitination of RHEB, promoting its association with the TSC-TBC complex and subsequent inhibition. Also mediates 'Lys-48'-linked polyubiquitination of target proteins and their subsequent targeting to the proteasome for degradation. This chain is E3 ubiquitin-protein ligase rnf152-A, found in Xenopus laevis (African clawed frog).